Here is a 313-residue protein sequence, read N- to C-terminus: Deoxyribonucleoside regulator (313 aa).

The H-T-H motif DNA-binding region spans Gln-23 to Gln-42.

The protein belongs to the SorC transcriptional regulatory family. As to quaternary structure, homooctamer.

Functionally, negative regulator of the dra-nupC-pdp operon. DeoR binds cooperatively to the operator DNA, which consists of a palindrome and a direct repeat sequence located 3' to the palindrome. The chain is Deoxyribonucleoside regulator from Bacillus subtilis (strain 168).